Consider the following 269-residue polypeptide: Gem-associated protein 2 (269 aa).

Residues serine 70 and serine 155 each carry the phosphoserine modification.

Belongs to the gemin-2 family. Monomer. Part of the core SMN complex that contains SMN1, GEMIN2/SIP1, DDX20/GEMIN3, GEMIN4, GEMIN5, GEMIN6, GEMIN7, GEMIN8 and STRAP/UNRIP. Part of the SMN-Sm complex that contains SMN1, GEMIN2/SIP1, DDX20/GEMIN3, GEMIN4, GEMIN5, GEMIN6, GEMIN7, GEMIN8, STRAP/UNRIP and the Sm proteins SNRPB, SNRPD1, SNRPD2, SNRPD3, SNRPE, SNRPF and SNRPG. Interacts with GEMIN5; the interaction is direct. Interacts (via C-terminus) with SMN1; the interaction is direct. Interacts with SNRPD1; the interaction is direct. Interacts with SNRPD2; the interaction is direct. Interacts (via N-terminus) with SNRPF; the interaction is direct. Interacts (via N-terminus) with SNRPE; the interaction is direct. Interacts (via N-terminus) with SNRPG; the interaction is direct.

The protein localises to the nucleus. The protein resides in the gem. It is found in the cytoplasm. Functionally, the SMN complex catalyzes the assembly of small nuclear ribonucleoproteins (snRNPs), the building blocks of the spliceosome, and thereby plays an important role in the splicing of cellular pre-mRNAs. Most spliceosomal snRNPs contain a common set of Sm proteins SNRPB, SNRPD1, SNRPD2, SNRPD3, SNRPE, SNRPF and SNRPG that assemble in a heptameric protein ring on the Sm site of the small nuclear RNA to form the core snRNP (Sm core). In the cytosol, the Sm proteins SNRPD1, SNRPD2, SNRPE, SNRPF and SNRPG (5Sm) are trapped in an inactive 6S pICln-Sm complex by the chaperone CLNS1A that controls the assembly of the core snRNP. To assemble core snRNPs, the SMN complex accepts the trapped 5Sm proteins from CLNS1A. Binding of snRNA inside 5Sm ultimately triggers eviction of the SMN complex, thereby allowing binding of SNRPD3 and SNRPB to complete assembly of the core snRNP. Within the SMN complex, GEMIN2 constrains the conformation of 5Sm, thereby promoting 5Sm binding to snRNA containing the snRNP code (a nonameric Sm site and a 3'-adjacent stem-loop), thus preventing progression of assembly until a cognate substrate is bound. The sequence is that of Gem-associated protein 2 from Mus musculus (Mouse).